A 457-amino-acid polypeptide reads, in one-letter code: GTPase Der (457 aa).

2 EngA-type G domains span residues 4-169 (PTIA…PENN) and 177-352 (IMMS…NQHR). GTP is bound by residues 10–17 (GRPNVGKS), 57–61 (DTGGL), 120–123 (NKCE), 183–190 (GRPNVGKS), 230–234 (DTAGI), and 295–298 (NKWD). The region spanning 353–438 (RRVTTSVVNE…PLILLWRGKQ (86 aa)) is the KH-like domain.

The protein belongs to the TRAFAC class TrmE-Era-EngA-EngB-Septin-like GTPase superfamily. EngA (Der) GTPase family. As to quaternary structure, associates with the 50S ribosomal subunit.

Functionally, GTPase that plays an essential role in the late steps of ribosome biogenesis. This Prochlorococcus marinus (strain AS9601) protein is GTPase Der.